The sequence spans 785 residues: (+)-copalyl diphosphate synthase 3, chloroplastic (785 aa).

Lys238 provides a ligand contact to substrate. 2 residues coordinate Mg(2+): Asp371 and Asp373. The DXDD motif motif lies at 371–374 (DIDD). Lys457 contributes to the substrate binding site.

This sequence belongs to the terpene synthase family. Mg(2+) is required as a cofactor. In terms of tissue distribution, present in both leaves and flowers, with higher levels in leaves.

The protein localises to the plastid. It localises to the chloroplast. The catalysed reaction is (2E,6E,10E)-geranylgeranyl diphosphate = (+)-copalyl diphosphate. The protein operates within secondary metabolite biosynthesis; terpenoid biosynthesis. In terms of biological role, involved in the biosynthesis of labdane-type diterpenoid including marrubiin and other labdane-related furanoid diterpenoids with potential applications as anti-diabetics, analgesics or vasorelaxants. Terpene synthase that produces (+)-copalyl diphosphate ((+)-CPP) from geranylgeranyl diphosphate (GGPP). In Marrubium vulgare (White horehound), this protein is (+)-copalyl diphosphate synthase 3, chloroplastic.